Here is a 271-residue protein sequence, read N- to C-terminus: Formamidopyrimidine-DNA glycosylase (271 aa).

Catalysis depends on proline 2, which acts as the Schiff-base intermediate with DNA. Glutamate 3 acts as the Proton donor in catalysis. The active-site Proton donor; for beta-elimination activity is the lysine 58. 3 residues coordinate DNA: histidine 92, arginine 111, and arginine 152. The FPG-type zinc-finger motif lies at 237 to 271 (MVYGREGEACRHCGGELKHATIGQRATVWCAACQR). Arginine 261 acts as the Proton donor; for delta-elimination activity in catalysis.

The protein belongs to the FPG family. Monomer. Zn(2+) is required as a cofactor.

The enzyme catalyses Hydrolysis of DNA containing ring-opened 7-methylguanine residues, releasing 2,6-diamino-4-hydroxy-5-(N-methyl)formamidopyrimidine.. The catalysed reaction is 2'-deoxyribonucleotide-(2'-deoxyribose 5'-phosphate)-2'-deoxyribonucleotide-DNA = a 3'-end 2'-deoxyribonucleotide-(2,3-dehydro-2,3-deoxyribose 5'-phosphate)-DNA + a 5'-end 5'-phospho-2'-deoxyribonucleoside-DNA + H(+). Involved in base excision repair of DNA damaged by oxidation or by mutagenic agents. Acts as a DNA glycosylase that recognizes and removes damaged bases. Has a preference for oxidized purines, such as 7,8-dihydro-8-oxoguanine (8-oxoG). Has AP (apurinic/apyrimidinic) lyase activity and introduces nicks in the DNA strand. Cleaves the DNA backbone by beta-delta elimination to generate a single-strand break at the site of the removed base with both 3'- and 5'-phosphates. This is Formamidopyrimidine-DNA glycosylase from Xanthomonas campestris pv. campestris (strain ATCC 33913 / DSM 3586 / NCPPB 528 / LMG 568 / P 25).